Consider the following 137-residue polypeptide: Large ribosomal subunit protein uL16 (137 aa).

Belongs to the universal ribosomal protein uL16 family. As to quaternary structure, part of the 50S ribosomal subunit.

In terms of biological role, binds 23S rRNA and is also seen to make contacts with the A and possibly P site tRNAs. In Xanthomonas campestris pv. campestris (strain 8004), this protein is Large ribosomal subunit protein uL16.